A 214-amino-acid chain; its full sequence is Imidazole glycerol phosphate synthase subunit HisH 2 (214 aa).

One can recognise a Glutamine amidotransferase type-1 domain in the interval 2 to 210 (KIVIIDYDMG…LDWVKIQKLG (209 aa)). Cys-82 serves as the catalytic Nucleophile. Residues His-185 and Glu-187 contribute to the active site.

Heterodimer of HisH and HisF.

It is found in the cytoplasm. It carries out the reaction 5-[(5-phospho-1-deoxy-D-ribulos-1-ylimino)methylamino]-1-(5-phospho-beta-D-ribosyl)imidazole-4-carboxamide + L-glutamine = D-erythro-1-(imidazol-4-yl)glycerol 3-phosphate + 5-amino-1-(5-phospho-beta-D-ribosyl)imidazole-4-carboxamide + L-glutamate + H(+). It catalyses the reaction L-glutamine + H2O = L-glutamate + NH4(+). It participates in amino-acid biosynthesis; L-histidine biosynthesis; L-histidine from 5-phospho-alpha-D-ribose 1-diphosphate: step 5/9. Functionally, IGPS catalyzes the conversion of PRFAR and glutamine to IGP, AICAR and glutamate. The HisH subunit provides the glutamine amidotransferase activity that produces the ammonia necessary to HisF for the synthesis of IGP and AICAR. The chain is Imidazole glycerol phosphate synthase subunit HisH 2 (hisH2) from Vibrio vulnificus (strain YJ016).